Reading from the N-terminus, the 536-residue chain is uncharacterized protein (536 aa).

The 232-residue stretch at 163–394 (LDAYDSMSVQ…MNFIPTRPLE (232 aa)) folds into the Radical SAM core domain. Positions 177, 181, and 184 each coordinate [4Fe-4S] cluster.

The cofactor is [4Fe-4S] cluster.

This is an uncharacterized protein from Synechocystis sp. (strain ATCC 27184 / PCC 6803 / Kazusa).